A 299-amino-acid polypeptide reads, in one-letter code: MADLPASLLILNGKSADNEQLREAIMLLRDEGIKIHVRVTWEKGDAARFVDEARQLGVATVIAGGGDGTINEVATALIQCEGNVIPALGILPLGTANDFATSVGIPVALDKALKLAIAGNAIEIDIAQVNKETCFINMATGGFGTRITTETPEKLKAALGGVSYIIHGLMRMDTLQPDRCEIRGENFHWQGDALVIGIGNGRQAGGGQQLCPNALINDGLLQLRIFTGDEILPALVSTLKPDEENPNIIDGASAWFDIQAPHDITFNLDGEPLSGQNFHIEILPAALRCRLPPDCPLLR.

The DAGKc domain maps to 2–133 (ADLPASLLIL…IDIAQVNKET (132 aa)). Residues T40, 66–72 (GDGTINE), and T95 contribute to the ATP site. Mg(2+) contacts are provided by L215, D218, and L220. Catalysis depends on E271, which acts as the Proton acceptor.

The protein belongs to the diacylglycerol/lipid kinase family. YegS lipid kinase subfamily. The cofactor is Mg(2+). Requires Ca(2+) as cofactor.

It is found in the cytoplasm. Functionally, probably phosphorylates lipids; the in vivo substrate is unknown. The polypeptide is Probable lipid kinase YegS (Escherichia fergusonii (strain ATCC 35469 / DSM 13698 / CCUG 18766 / IAM 14443 / JCM 21226 / LMG 7866 / NBRC 102419 / NCTC 12128 / CDC 0568-73)).